The following is a 283-amino-acid chain: 4-diphosphocytidyl-2-C-methyl-D-erythritol kinase (283 aa).

Residue Lys10 is part of the active site. 99 to 109 (PMGGGLGGGSS) provides a ligand contact to ATP. The active site involves Asp141.

The protein belongs to the GHMP kinase family. IspE subfamily. Homodimer.

It catalyses the reaction 4-CDP-2-C-methyl-D-erythritol + ATP = 4-CDP-2-C-methyl-D-erythritol 2-phosphate + ADP + H(+). The protein operates within isoprenoid biosynthesis; isopentenyl diphosphate biosynthesis via DXP pathway; isopentenyl diphosphate from 1-deoxy-D-xylulose 5-phosphate: step 3/6. Its function is as follows. Catalyzes the phosphorylation of the position 2 hydroxy group of 4-diphosphocytidyl-2C-methyl-D-erythritol. This chain is 4-diphosphocytidyl-2-C-methyl-D-erythritol kinase, found in Escherichia coli O157:H7 (strain EC4115 / EHEC).